A 555-amino-acid chain; its full sequence is Solute carrier family 22 member 2 (555 aa).

The Cytoplasmic portion of the chain corresponds to 1–22 (MPTTVDDVLEHGGEFHFFQKQM). A helical membrane pass occupies residues 23–43 (FFLLALLSATFAPIYVGIVFL). Residues 44–150 (GFTPDHRCRS…LVCANSWMLD (107 aa)) are Extracellular-facing. Asparagine 72 is a glycosylation site (N-linked (GlcNAc...) asparagine). Residues 151–171 (LFQSSVNVGFFIGSMSIGYIA) traverse the membrane as a helical segment. The Cytoplasmic portion of the chain corresponds to 172 to 177 (DRFGRK). Residues 178–198 (LCLLTTVLINAAAGVLMAISP) form a helical membrane-spanning segment. Topologically, residues 199–208 (TYTWMLIFRL) are extracellular. Residues 209-229 (IQGLVSKAGWLIGYILITEFV) traverse the membrane as a helical segment. Over 230–238 (GRRYRRTVG) the chain is Cytoplasmic. The helical transmembrane segment at 239-259 (IFYQVAYTVGLLVLAGVAYAL) threads the bilayer. The Extracellular segment spans residues 260–263 (PHWR). The chain crosses the membrane as a helical span at residues 264–284 (WLQFTVSLPNFFFLLYYWCIP). Residues 284–288 (PESPR) carry the Proline-rich sequence motif. Topologically, residues 285–348 (ESPRWLISQN…VRTPQIRKHT (64 aa)) are cytoplasmic. Residues 349-369 (MILMYNWFTSSVLYQGLIMHM) form a helical membrane-spanning segment. At 370–375 (GLAGDN) the chain is on the extracellular side. The chain crosses the membrane as a helical span at residues 376 to 396 (IYLDFFYSALVEFPAAFMIIL). Over 397–414 (TIDRIGRRYPWAASNMVA) the chain is Cytoplasmic. Residues 415 to 435 (GAACLASVFIPGDLQWLKIII) form a helical membrane-spanning segment. Over 436–441 (SCLGRM) the chain is Extracellular. Residues 442 to 462 (GITMAYEIVCLVNAELYPTFI) traverse the membrane as a helical segment. Over 463-464 (RN) the chain is Cytoplasmic. The chain crosses the membrane as a helical span at residues 465–485 (LGVHICSSMCDIGGIITPFLV). Over 486–494 (YRLTNIWLE) the chain is Extracellular. A helical membrane pass occupies residues 495–515 (LPLMVFGVLGLVAGGLVLLLP). Residues 516 to 555 (ETKGKALPETIEEAENMQRPRKNKEKMIYLQVQKLDIPLN) are Cytoplasmic-facing.

This sequence belongs to the major facilitator (TC 2.A.1) superfamily. Organic cation transporter (TC 2.A.1.19) family. Tyrosine phosphorylated by tyrosine-protein kinase YES1. As to expression, mainly expressed in kidney, in the cortex and medulla. Localized in testis, mostly to peritubular myoid cells and Leydig cells and also detected along the basal membrane of Sertoli cells. Expressed in brain, in neurons of the cerebral cortex and in various subcortical nuclei. In the brain, also detected in the dopaminergic regions of the substantia nigra. Expressed in tracheal and bronchial ciliated epithelium in the respiratory tract. Also detected in secretory phase endometrium, in scattered stromal cells. Expressed in spleen, placenta, small intestine and spinal cord. Weakly expressed in prostate, uterus and lung. Mainly expressed in kidney, bone marrow and testis. Expressed in colon, skeletal muscle, spinal cord, placenta and liver.

The protein resides in the basolateral cell membrane. The protein localises to the basal cell membrane. Its subcellular location is the apical cell membrane. The enzyme catalyses (R)-noradrenaline(out) = (R)-noradrenaline(in). It carries out the reaction (R)-adrenaline(out) = (R)-adrenaline(in). It catalyses the reaction serotonin(out) = serotonin(in). The catalysed reaction is dopamine(out) = dopamine(in). The enzyme catalyses histamine(out) = histamine(in). It carries out the reaction thiamine(in) = thiamine(out). It catalyses the reaction creatinine(in) = creatinine(out). The catalysed reaction is 1-methylnicotinamide(out) = 1-methylnicotinamide(in). The enzyme catalyses guanidine(out) = guanidine(in). It carries out the reaction choline(out) = choline(in). It catalyses the reaction agmatine(out) = agmatine(in). The catalysed reaction is putrescine(out) = putrescine(in). The enzyme catalyses spermidine(in) = spermidine(out). It carries out the reaction tyramine(in) = tyramine(out). It catalyses the reaction L-histidyl-L-proline diketopiperazine(in) = L-histidyl-L-proline diketopiperazine(out). The catalysed reaction is (R)-salsolinol(in) = (R)-salsolinol(out). The enzyme catalyses N-methyl-(R)-salsolinol(in) = N-methyl-(R)-salsolinol(out). It carries out the reaction acetylcholine(in) = acetylcholine(out). It catalyses the reaction prostaglandin F2alpha(out) = prostaglandin F2alpha(in). The catalysed reaction is prostaglandin E2(out) = prostaglandin E2(in). With respect to regulation, tyrosine phosphorylation of the transporter leads to activation of the transport activity. TEA uptake is activated by tyrosine phosphorylation. Inhibited by cGMP, most likely through a cGMP-binding protein that interacts with OCT2. Electrogenic voltage-dependent transporter that mediates the transport of a variety of organic cations such as endogenous bioactive amines, cationic drugs and xenobiotics. Functions as a Na(+)-independent, bidirectional uniporter. Cation cellular uptake or release is driven by the electrochemical potential, i.e. membrane potential and concentration gradient. However, may also engage electroneutral cation exchange when saturating concentrations of cation substrates are reached. Predominantly expressed at the basolateral membrane of hepatocytes and proximal tubules and involved in the uptake and disposition of cationic compounds by hepatic and renal clearance from the blood flow. Implicated in monoamine neurotransmitters uptake such as histamine, dopamine, adrenaline/epinephrine, noradrenaline/norepinephrine, serotonin and tyramine, thereby supporting a physiological role in the central nervous system by regulating interstitial concentrations of neurotransmitters. Also capable of transporting dopaminergic neuromodulators cyclo(his-pro), salsolinol and N-methyl-salsolinol, thereby involved in the maintenance of dopaminergic cell integrity in the central nervous system. Mediates the bidirectional transport of acetylcholine (ACh) at the apical membrane of ciliated cell in airway epithelium, thereby playing a role in luminal release of ACh from bronchial epithelium. Also transports guanidine and endogenous monoamines such as vitamin B1/thiamine, creatinine and N-1-methylnicotinamide (NMN). Mediates the uptake and efflux of quaternary ammonium compound choline. Mediates the bidirectional transport of polyamine agmatine and the uptake of polyamines putrescine and spermidine. Able to transport non-amine endogenous compounds such as prostaglandin E2 (PGE2) and prostaglandin F2-alpha (PGF2-alpha). Also involved in the uptake of xenobiotic 4-(4-(dimethylamino)styryl)-N-methylpyridinium (ASP). May contribute to regulate the transport of organic compounds in testis across the blood-testis-barrier. Its function is as follows. In contrast with isoform 1, not able to transport guanidine, creatinine, cimetidine and metformin. The sequence is that of Solute carrier family 22 member 2 from Homo sapiens (Human).